The chain runs to 168 residues: Photosystem I assembly protein Ycf3 (168 aa).

3 TPR repeats span residues 35–68, 72–105, and 120–153; these read AFTYYRDGMSAQSEGNYAEALQNYYEAMRLEIDP, SYILYNIGLIHTSNGEHTKALEYYFRALERNPFL, and GEQAIQQGDSEIAEAWFDQAAEYWKQAIALTPGN.

It belongs to the Ycf3 family.

The protein resides in the plastid. It localises to the chloroplast thylakoid membrane. Essential for the assembly of the photosystem I (PSI) complex. May act as a chaperone-like factor to guide the assembly of the PSI subunits. The sequence is that of Photosystem I assembly protein Ycf3 from Solanum lycopersicum (Tomato).